Consider the following 303-residue polypeptide: Deoxyhypusine hydroxylase (303 aa).

An N-acetylmethionine modification is found at methionine 1. 6 HEAT-like PBS-type repeats span residues 23–49 (ARFR…AFDD), 54–80 (LKHE…VLRD), 87–113 (VRHE…YSTD), 175–201 (DRYR…GLRC), 206–232 (FRHE…ALAQ), and 239–265 (VRHE…HVAD). 3 residues coordinate Fe cation: histidine 56, histidine 89, and glutamate 90. Fe cation-binding residues include histidine 208, histidine 241, and glutamate 242.

The protein belongs to the deoxyhypusine hydroxylase family. Fe(2+) is required as a cofactor.

It catalyses the reaction [eIF5A protein]-deoxyhypusine + AH2 + O2 = [eIF5A protein]-hypusine + A + H2O. The protein operates within protein modification; eIF5A hypusination. Functionally, catalyzes the hydroxylation of the N(6)-(4-aminobutyl)-L-lysine intermediate produced by deoxyhypusine synthase/DHPS on a critical lysine of the eukaryotic translation initiation factor 5A/eIF-5A. This is the second step of the post-translational modification of that lysine into an unusual amino acid residue named hypusine. Hypusination is unique to mature eIF-5A factor and is essential for its function. The protein is Deoxyhypusine hydroxylase of Bos taurus (Bovine).